The primary structure comprises 170 residues: MKVIIASQNPAKIAAVESAFNLAFPNDTFSFEGVSVKSGVPDQPMSCEETKQGAMNRINNAKIKLPNCDYYVGLEAGIEGNSTFAWMIIDNGLTVGESRSSSLPLPPQVIDEVKKGKELGDVMDEQFNTDNIKQKGGAIGLLTNNLLTRTSVYQQALILALIPFLHPTRF.

It belongs to the YjjX NTPase family. In terms of assembly, homodimer. Mg(2+) is required as a cofactor. It depends on Mn(2+) as a cofactor.

It carries out the reaction XTP + H2O = XDP + phosphate + H(+). The enzyme catalyses ITP + H2O = IDP + phosphate + H(+). Its function is as follows. Phosphatase that hydrolyzes non-canonical purine nucleotides such as XTP and ITP to their respective diphosphate derivatives. Probably excludes non-canonical purines from DNA/RNA precursor pool, thus preventing their incorporation into DNA/RNA and avoiding chromosomal lesions. This Aliivibrio fischeri (strain ATCC 700601 / ES114) (Vibrio fischeri) protein is Inosine/xanthosine triphosphatase.